Reading from the N-terminus, the 212-residue chain is Cyclin-dependent kinase inhibitor 3 (212 aa).

Residues 1–24 (MKPPISIQASEFDSSDEEPADDEQ) form a disordered region. Positions 1–34 (MKPPISIQASEFDSSDEEPADDEQTPIQISWLPL) are interaction with CDK2. Residues 13 to 24 (DSSDEEPADDEQ) are compositionally biased toward acidic residues. Residues 32–201 (LPLSRVNCSQ…FRDKLAAYLS (170 aa)) enclose the Tyrosine-protein phosphatase domain. Cysteine 140 acts as the Phosphocysteine intermediate in catalysis.

Belongs to the protein-tyrosine phosphatase family. In terms of assembly, interacts with cyclin-dependent kinases such as CDK1, CDK2 and CDK3. Does not interact with CDK4. Interacts (via C-terminus) with phosphorylated CDK2 (via C-terminal helix). Interacts with MS4A3 (via C-terminus); the interaction enhances CDKN3 enzymatic activity.

It localises to the cytoplasm. Its subcellular location is the perinuclear region. The enzyme catalyses O-phospho-L-tyrosyl-[protein] + H2O = L-tyrosyl-[protein] + phosphate. It catalyses the reaction O-phospho-L-seryl-[protein] + H2O = L-seryl-[protein] + phosphate. The catalysed reaction is O-phospho-L-threonyl-[protein] + H2O = L-threonyl-[protein] + phosphate. Functionally, may play a role in cell cycle regulation. Dual specificity phosphatase active toward substrates containing either phosphotyrosine or phosphoserine residues. Dephosphorylates CDK2 at 'Thr-160' in a cyclin-dependent manner. The protein is Cyclin-dependent kinase inhibitor 3 of Rattus norvegicus (Rat).